Consider the following 101-residue polypeptide: Large ribosomal subunit protein uL24 (101 aa).

The protein belongs to the universal ribosomal protein uL24 family. As to quaternary structure, part of the 50S ribosomal subunit.

Functionally, one of two assembly initiator proteins, it binds directly to the 5'-end of the 23S rRNA, where it nucleates assembly of the 50S subunit. Its function is as follows. One of the proteins that surrounds the polypeptide exit tunnel on the outside of the subunit. This chain is Large ribosomal subunit protein uL24, found in Thermobifida fusca (strain YX).